The primary structure comprises 350 residues: Phenylalanine--tRNA ligase alpha subunit (350 aa).

A Mg(2+)-binding site is contributed by Glu-257.

It belongs to the class-II aminoacyl-tRNA synthetase family. Phe-tRNA synthetase alpha subunit type 1 subfamily. Tetramer of two alpha and two beta subunits. The cofactor is Mg(2+).

The protein resides in the cytoplasm. It carries out the reaction tRNA(Phe) + L-phenylalanine + ATP = L-phenylalanyl-tRNA(Phe) + AMP + diphosphate + H(+). In Listeria monocytogenes serotype 4b (strain CLIP80459), this protein is Phenylalanine--tRNA ligase alpha subunit.